The chain runs to 313 residues: tRNA dimethylallyltransferase (313 aa).

11–18 (GPTACGKT) contacts ATP. Substrate is bound at residue 13–18 (TACGKT). Interaction with substrate tRNA regions lie at residues 36 to 39 (DSAL), 160 to 164 (QRIGR), and 243 to 248 (RCVGYR).

The protein belongs to the IPP transferase family. As to quaternary structure, monomer. It depends on Mg(2+) as a cofactor.

It catalyses the reaction adenosine(37) in tRNA + dimethylallyl diphosphate = N(6)-dimethylallyladenosine(37) in tRNA + diphosphate. Its function is as follows. Catalyzes the transfer of a dimethylallyl group onto the adenine at position 37 in tRNAs that read codons beginning with uridine, leading to the formation of N6-(dimethylallyl)adenosine (i(6)A). The chain is tRNA dimethylallyltransferase from Neisseria gonorrhoeae (strain NCCP11945).